We begin with the raw amino-acid sequence, 182 residues long: NADH-quinone oxidoreductase subunit I (182 aa).

4Fe-4S ferredoxin-type domains are found at residues 52 to 82 (LTRD…LQKA) and 92 to 121 (DFFR…LTPD). Cys62, Cys65, Cys68, Cys72, Cys101, Cys104, Cys107, and Cys111 together coordinate [4Fe-4S] cluster.

It belongs to the complex I 23 kDa subunit family. In terms of assembly, NDH-1 is composed of 13 different subunits. Subunits NuoA, H, J, K, L, M, N constitute the membrane sector of the complex. The cofactor is [4Fe-4S] cluster.

It is found in the cell inner membrane. It catalyses the reaction a quinone + NADH + 5 H(+)(in) = a quinol + NAD(+) + 4 H(+)(out). Functionally, NDH-1 shuttles electrons from NADH, via FMN and iron-sulfur (Fe-S) centers, to quinones in the respiratory chain. The immediate electron acceptor for the enzyme in this species is believed to be ubiquinone. Couples the redox reaction to proton translocation (for every two electrons transferred, four hydrogen ions are translocated across the cytoplasmic membrane), and thus conserves the redox energy in a proton gradient. The protein is NADH-quinone oxidoreductase subunit I of Pseudomonas fluorescens (strain Pf0-1).